The primary structure comprises 369 residues: Dihydroorotate dehydrogenase (quinone) (369 aa).

Residues 76 to 80 (AGLDK) and Thr-100 each bind FMN. Lys-80 is a substrate binding site. A substrate-binding site is contributed by 125-129 (NRMGF). 2 residues coordinate FMN: Asn-154 and Asn-187. Substrate is bound at residue Asn-187. The active-site Nucleophile is the Ser-190. Asn-192 is a substrate binding site. FMN-binding residues include Lys-232 and Ser-260. 261 to 262 (NT) contributes to the substrate binding site. Residues Gly-282, Gly-311, and 332 to 333 (YS) each bind FMN.

The protein belongs to the dihydroorotate dehydrogenase family. Type 2 subfamily. In terms of assembly, monomer. FMN is required as a cofactor.

Its subcellular location is the cell membrane. The enzyme catalyses (S)-dihydroorotate + a quinone = orotate + a quinol. It functions in the pathway pyrimidine metabolism; UMP biosynthesis via de novo pathway; orotate from (S)-dihydroorotate (quinone route): step 1/1. Catalyzes the conversion of dihydroorotate to orotate with quinone as electron acceptor. This Deinococcus radiodurans (strain ATCC 13939 / DSM 20539 / JCM 16871 / CCUG 27074 / LMG 4051 / NBRC 15346 / NCIMB 9279 / VKM B-1422 / R1) protein is Dihydroorotate dehydrogenase (quinone) (pyrD).